The sequence spans 544 residues: Glucans biosynthesis protein G 1 (544 aa).

The N-terminal stretch at 1–33 is a signal peptide; it reads MVSLLRCQSFKPSSIICSLALSAAFALSGTAFA. The tract at residues 36–58 is disordered; that stretch reads SKPAENKPATPVVSPPKATAPSA.

This sequence belongs to the OpgD/OpgG family.

It is found in the periplasm. Its pathway is glycan metabolism; osmoregulated periplasmic glucan (OPG) biosynthesis. Functionally, involved in the biosynthesis of osmoregulated periplasmic glucans (OPGs). This Shewanella oneidensis (strain ATCC 700550 / JCM 31522 / CIP 106686 / LMG 19005 / NCIMB 14063 / MR-1) protein is Glucans biosynthesis protein G 1 (opgG1).